Consider the following 237-residue polypeptide: Concanavalin-Br (237 aa).

Residues E8 and D10 each contribute to the Mn(2+) site. Ca(2+)-binding residues include D10, Y12, N14, and D19. Y12 contacts a carbohydrate. Mn(2+)-binding residues include D19, H24, and S34. 99 to 100 (LY) contacts a carbohydrate. D208 provides a ligand contact to Ca(2+). R228 is an a carbohydrate binding site.

The protein belongs to the leguminous lectin family. As to quaternary structure, homotetramer.

Glucose/D-mannose specific lectin. Has anti-inflammatory activity in rats. Induces histamine release in mast cells from hamster and rat. Induces lymphocyte proliferation and IFNG production. Shows toxicity against the aquatic snail B.glabrata at concentrations higher than 20 ug/ml. In Canavalia brasiliensis (Brazilian jack bean), this protein is Concanavalin-Br.